The primary structure comprises 324 residues: Probable UDP-sugar transporter protein SLC35A4 (324 aa).

The Cytoplasmic segment spans residues 1–18; that stretch reads MSVEDGGMPGLARPKQAR. Residues 19–39 form a helical membrane-spanning segment; that stretch reads WTLMLFLSTAMYGAHAPFLAL. Residues 40–52 are Lumenal-facing; that stretch reads CHVDGRVPFRPSS. The helical transmembrane segment at 53 to 73 threads the bilayer; sequence AVLLTELTKLLLCAFSLLVGW. Over 74–85 the chain is Cytoplasmic; the sequence is QTWPQGTPPWRQ. The helical transmembrane segment at 86 to 106 threads the bilayer; it reads AAPFALSALLYGANNNLVIYL. The Lumenal segment spans residues 107-142; sequence QRYMDPSTYQVLSNLKIGSTALLYCLCLGHRLSARQ. The chain crosses the membrane as a helical span at residues 143–163; it reads GLALLLLMAAGACYASGGFQE. Over 164-180 the chain is Cytoplasmic; sequence PGNTLPGPRSAAGARPM. The helical transmembrane segment at 181–201 threads the bilayer; that stretch reads PLHITPLGLLLLILYCLISGL. Topologically, residues 202–214 are lumenal; it reads SSVYTELIMKRQR. The chain crosses the membrane as a helical span at residues 215–235; the sequence is LPLALQNLFLYTFGVILNLGL. Over 236–248 the chain is Cytoplasmic; the sequence is YAGSGPGPGFLEG. A helical membrane pass occupies residues 249–271; sequence FSGWAVLVVLNQAVNGLLMSAVM. Topologically, residues 272–279 are lumenal; it reads KHGSSITR. Residues 280 to 300 form a helical membrane-spanning segment; that stretch reads LFIVSCSLVVNAVLSAVLLQL. The Cytoplasmic portion of the chain corresponds to 301-324; sequence QLTATFFLAALLIGLAVCLYYGSP.

This sequence belongs to the nucleotide-sugar transporter family. SLC35A subfamily. In terms of assembly, found in a complex with SLC35A2 and SLC35A3. In terms of tissue distribution, expressed in the kidney, lung, testis, and prostate. Expressed in the brain by sets of neurons, such as the pyramidal cells of the cortex, the Purkinje cells of the cerebellum, and the motoneurons of the brainstem.

The protein resides in the golgi apparatus membrane. It catalyses the reaction CDP-L-ribitol(in) + CDP(out) = CDP-L-ribitol(out) + CDP(in). Functionally, mediates the transport of CDP-ribitol. Does not exhibit CMP-sialic acid, UDP-galactose and UDP-N-acetylglucosamine transport activity. The chain is Probable UDP-sugar transporter protein SLC35A4 from Rattus norvegicus (Rat).